Reading from the N-terminus, the 520-residue chain is Cyclic AMP-responsive element-binding protein 3-like protein 2 (520 aa).

The Cytoplasmic portion of the chain corresponds to 1–379 (MEVLESGEQG…KLAGTQTGTC (379 aa)). A Phosphoserine modification is found at Ser93. Lys178 participates in a covalent cross-link: Glycyl lysine isopeptide (Lys-Gly) (interchain with G-Cter in SUMO2). Ser191 carries the post-translational modification Phosphoserine. Positions 195–264 (APVDHLHLPP…PHKLQGSGPL (70 aa)) are disordered. Composition is skewed to low complexity over residues 208-220 (SSHG…SLSP) and 234-255 (SPSR…LTAP). Residues 294-357 (ALKKIRRKIK…RTLLQQLQKL (64 aa)) form the bZIP domain. Positions 296 to 325 (KKIRRKIKNKISAQESRRKKKEYMDSLEKK) are basic motif. Residues 336 to 357 (LRKKVEVLENTNRTLLQQLQKL) are leucine-zipper. Residues 380 to 400 (LMVVVLCFAVAFGSFFQGYGP) form a helical; Signal-anchor for type II membrane protein membrane-spanning segment. Topologically, residues 401–520 (YPSATKMALP…ELDRRVNTTF (120 aa)) are lumenal. Residues 427 to 430 (RNLL) carry the S1P recognition motif. Residues Asn480, Asn504, and Asn517 are each glycosylated (N-linked (GlcNAc...) asparagine).

This sequence belongs to the bZIP family. ATF subfamily. In terms of assembly, binds DNA as a dimer. Post-translationally, upon ER stress, translocated to the Golgi apparatus, where it is processed by regulated intramembrane proteolysis (RIP) to release the cytosol-facing N-terminal transcription factor domain. The cleavage is performed sequentially by site-1 and site-2 proteases (S1P/MBTPS1 and S2P/MBTPS2). In terms of processing, N-glycosylated. Ubiquitinated by HRD1/SYVN1; undergoes 'Lys-48'-linked ubiquitination, followed by rapid proteasomal degradation under normal conditions. Upon ER stress, SYVN1 E3 ubiquitin-protein ligase dissociates from its substrate, ubiquitination does not occur and CREB3L2 is stabilized. In terms of tissue distribution, widely expressed with highest levels in placenta, lung, spleen and intestine, and lowest levels in heart, brain, skeletal muscle, thymus, colon and leukocytes. In fetal tissues, the weakest expression is detected in brain and heart.

The protein resides in the endoplasmic reticulum membrane. It is found in the nucleus. Functionally, transcription factor involved in unfolded protein response (UPR). In the absence of endoplasmic reticulum (ER) stress, inserted into ER membranes, with N-terminal DNA-binding and transcription activation domains oriented toward the cytosolic face of the membrane. In response to ER stress, transported to the Golgi, where it is cleaved in a site-specific manner by resident proteases S1P/MBTPS1 and S2P/MBTPS2. The released N-terminal cytosolic domain is translocated to the nucleus to effect transcription of specific target genes. Plays a critical role in chondrogenesis by activating the transcription of SEC23A, which promotes the transport and secretion of cartilage matrix proteins, and possibly that of ER biogenesis-related genes. In a neuroblastoma cell line, protects cells from ER stress-induced death. In vitro activates transcription of target genes via direct binding to the CRE site. This Homo sapiens (Human) protein is Cyclic AMP-responsive element-binding protein 3-like protein 2 (CREB3L2).